The following is a 421-amino-acid chain: Tyrosine--tRNA ligase (421 aa).

Tyr-35 lines the L-tyrosine pocket. Residues 40–49 (PTADSLHIGH) carry the 'HIGH' region motif. Residues Tyr-170 and Gln-174 each coordinate L-tyrosine. The short motif at 232-236 (KFGKT) is the 'KMSKS' region element. Lys-235 contacts ATP. Residues 355–421 (LSLVDVLVES…GKKKYFLITY (67 aa)) form the S4 RNA-binding domain.

The protein belongs to the class-I aminoacyl-tRNA synthetase family. TyrS type 1 subfamily. In terms of assembly, homodimer.

It localises to the cytoplasm. The catalysed reaction is tRNA(Tyr) + L-tyrosine + ATP = L-tyrosyl-tRNA(Tyr) + AMP + diphosphate + H(+). Its function is as follows. Catalyzes the attachment of tyrosine to tRNA(Tyr) in a two-step reaction: tyrosine is first activated by ATP to form Tyr-AMP and then transferred to the acceptor end of tRNA(Tyr). This chain is Tyrosine--tRNA ligase, found in Bacillus velezensis (strain DSM 23117 / BGSC 10A6 / LMG 26770 / FZB42) (Bacillus amyloliquefaciens subsp. plantarum).